Consider the following 102-residue polypeptide: Urease subunit beta (102 aa).

Belongs to the urease beta subunit family. Heterotrimer of UreA (gamma), UreB (beta) and UreC (alpha) subunits. Three heterotrimers associate to form the active enzyme.

Its subcellular location is the cytoplasm. The enzyme catalyses urea + 2 H2O + H(+) = hydrogencarbonate + 2 NH4(+). It participates in nitrogen metabolism; urea degradation; CO(2) and NH(3) from urea (urease route): step 1/1. The polypeptide is Urease subunit beta (Trichodesmium erythraeum (strain IMS101)).